The following is a 264-amino-acid chain: Mannose-specific lectin CEA (264 aa).

The N-terminal stretch at methionine 1 to alanine 23 is a signal peptide. Bulb-type lectin domains lie at threonine 26–proline 131 and asparagine 145–lysine 252. Residues glutamine 51–asparagine 55, tyrosine 59, tryptophan 63, glutamine 64, glutamine 170–asparagine 174, tyrosine 178, and tyrosine 182–glutamine 185 contribute to the beta-D-mannose site. Residues glutamine 51–tyrosine 59 carry the Carbohydrate-binding motif 1 motif. 2 disulfides stabilise this stretch: cysteine 54–cysteine 74 and cysteine 173–cysteine 195. The Carbohydrate-binding motif 2 motif lies at glutamine 170–tyrosine 178.

Forms heterotetramer of 2 chains 1 and 2 chains 2 arranged as a dimer of chain 1 and chain 2 heterodimers.

Its subcellular location is the secreted. Functionally, mannose-specific lectin. Shows agglutinating activity towards erythrocytes from rabbit. Has insecticidal activity against cotton aphids and other hemipteran insects. This chain is Mannose-specific lectin CEA, found in Colocasia esculenta (Wild taro).